The primary structure comprises 240 residues: Cysteine-rich venom protein (240 aa).

The signal sequence occupies residues 1–19 (MIAFIVLPILAAVLHQSSG). The SCP domain maps to 39–166 (DLHNSLRRSV…KYRYFYVCQY (128 aa)). Intrachain disulfides connect C75–C153, C92–C167, C148–C164, C186–C193, C189–C198, C202–C235, C211–C229, and C220–C233. Residues 202 to 235 (CTQENTYSNCNSLVQQSSCQDNNMKTKCPASCFC) enclose the ShKT domain.

This sequence belongs to the CRISP family. In terms of tissue distribution, expressed by the venom gland.

The protein localises to the secreted. In terms of biological role, may block ryanodine receptors (RYR). This chain is Cysteine-rich venom protein, found in Protobothrops mucrosquamatus (Taiwan habu).